A 985-amino-acid chain; its full sequence is Exocyst complex component 4 (985 aa).

A coiled-coil region spans residues 36–70; sequence SETTEERQKEKQKIEAEFKRSDLRLNELVSRHDQQ. Phosphoserine occurs at positions 235, 456, 459, 682, and 686. Residues 434-480 form a disordered region; the sequence is DKSSHVGTSNNSDAFKEHRRNASDASVDDNLAGQLGGSGKGSTSGLF.

This sequence belongs to the SEC8 family. The exocyst complex is composed of Sec3/Exoc1, Sec5/Exoc2, Sec6/Exoc3, Sec8/Exoc4, Sec10/Exoc5, Sec15/Exoc6, exo70/Exoc7 and Exo84/Exoc8. As to expression, abundant in the embryonic and larval glutamatergic neuromuscular junctions (NMJs), pre and postsynaptically.

Component of the exocyst complex involved in the docking of exocytic vesicles with fusion sites on the plasma membrane. Involved in regulation of synaptic microtubule formation, and also regulation of synaptic growth and glutamate receptor trafficking. Does not appear to be required for basal neurotransmission. This is Exocyst complex component 4 from Drosophila melanogaster (Fruit fly).